The following is a 286-amino-acid chain: Protein N-terminal amidase (286 aa).

The 286-residue stretch at 1 to 286 (MKFGCVQFFP…NGIVVGELEK (286 aa)) folds into the CN hydrolase domain. Glutamate 43 serves as the catalytic Proton acceptor. The active-site Proton donor is lysine 121. Catalysis depends on cysteine 155, which acts as the Nucleophile.

Belongs to the carbon-nitrogen hydrolase superfamily.

Its subcellular location is the cytoplasm. The protein localises to the nucleus. Functionally, deamidates N-terminal Asn and Gln. Component of a targeting complex in the N-end rule pathway. In Schizosaccharomyces pombe (strain 972 / ATCC 24843) (Fission yeast), this protein is Protein N-terminal amidase (nta1).